A 329-amino-acid polypeptide reads, in one-letter code: Lipoyl synthase (329 aa).

Positions 55, 60, 66, 81, 85, 88, and 292 each coordinate [4Fe-4S] cluster. Residues 67–281 enclose the Radical SAM core domain; that stretch reads WEDREATFLI…KAEAEAIGFL (215 aa).

The protein belongs to the radical SAM superfamily. Lipoyl synthase family. [4Fe-4S] cluster is required as a cofactor.

The protein localises to the cytoplasm. The catalysed reaction is [[Fe-S] cluster scaffold protein carrying a second [4Fe-4S](2+) cluster] + N(6)-octanoyl-L-lysyl-[protein] + 2 oxidized [2Fe-2S]-[ferredoxin] + 2 S-adenosyl-L-methionine + 4 H(+) = [[Fe-S] cluster scaffold protein] + N(6)-[(R)-dihydrolipoyl]-L-lysyl-[protein] + 4 Fe(3+) + 2 hydrogen sulfide + 2 5'-deoxyadenosine + 2 L-methionine + 2 reduced [2Fe-2S]-[ferredoxin]. It participates in protein modification; protein lipoylation via endogenous pathway; protein N(6)-(lipoyl)lysine from octanoyl-[acyl-carrier-protein]: step 2/2. In terms of biological role, catalyzes the radical-mediated insertion of two sulfur atoms into the C-6 and C-8 positions of the octanoyl moiety bound to the lipoyl domains of lipoate-dependent enzymes, thereby converting the octanoylated domains into lipoylated derivatives. This chain is Lipoyl synthase, found in Clavibacter sepedonicus (Clavibacter michiganensis subsp. sepedonicus).